We begin with the raw amino-acid sequence, 214 residues long: Inner membrane-spanning protein YciB (214 aa).

Transmembrane regions (helical) follow at residues 11–31 (ILFFIAFKLYGIYVATAVAII), 50–70 (MHIITLALIVILGGATLILQD), 81–101 (VNWGFALVFLGSHFIGQKPII), 119–139 (LSYMWIAFFIFSGIANIYVAY), and 149–169 (FKLFGLMGLTLAFILIQGVYI).

It belongs to the YciB family.

It localises to the cell inner membrane. In terms of biological role, plays a role in cell envelope biogenesis, maintenance of cell envelope integrity and membrane homeostasis. The protein is Inner membrane-spanning protein YciB of Hydrogenovibrio crunogenus (strain DSM 25203 / XCL-2) (Thiomicrospira crunogena).